The following is a 221-amino-acid chain: Phosphoribosylformylglycinamidine synthase subunit PurQ (221 aa).

One can recognise a Glutamine amidotransferase type-1 domain in the interval 6 to 221 (VGVVVFPGSN…LFTLKSLILK (216 aa)). Cys-89 serves as the catalytic Nucleophile. Active-site residues include His-197 and Glu-199.

As to quaternary structure, part of the FGAM synthase complex composed of 1 PurL, 1 PurQ and 2 PurS subunits.

Its subcellular location is the cytoplasm. It carries out the reaction N(2)-formyl-N(1)-(5-phospho-beta-D-ribosyl)glycinamide + L-glutamine + ATP + H2O = 2-formamido-N(1)-(5-O-phospho-beta-D-ribosyl)acetamidine + L-glutamate + ADP + phosphate + H(+). It catalyses the reaction L-glutamine + H2O = L-glutamate + NH4(+). The protein operates within purine metabolism; IMP biosynthesis via de novo pathway; 5-amino-1-(5-phospho-D-ribosyl)imidazole from N(2)-formyl-N(1)-(5-phospho-D-ribosyl)glycinamide: step 1/2. Part of the phosphoribosylformylglycinamidine synthase complex involved in the purines biosynthetic pathway. Catalyzes the ATP-dependent conversion of formylglycinamide ribonucleotide (FGAR) and glutamine to yield formylglycinamidine ribonucleotide (FGAM) and glutamate. The FGAM synthase complex is composed of three subunits. PurQ produces an ammonia molecule by converting glutamine to glutamate. PurL transfers the ammonia molecule to FGAR to form FGAM in an ATP-dependent manner. PurS interacts with PurQ and PurL and is thought to assist in the transfer of the ammonia molecule from PurQ to PurL. The sequence is that of Phosphoribosylformylglycinamidine synthase subunit PurQ from Prochlorococcus marinus (strain MIT 9312).